The primary structure comprises 611 residues: TANK-binding kinase 1-binding protein 1 (611 aa).

The homodimerization stretch occupies residues 1-280 (MESMFEDDIS…QDLASNQSEC (280 aa)). Residues 48 to 162 (YGDIKERLGG…ALVETHLRQI (115 aa)) are a coiled coil. S184 is modified (phosphoserine). A coiled-coil region spans residues 218–277 (TSVSVSELERRRLEEALEAAQGEARGAQLREEQLQAECERLQGELKQLQETRAQDLASNQ). Residues 281-330 (DMAWVKRVGDDQVNLALAYTELTEELGRLRELSSLQGRILRTLLQEQARN) form an interaction with TBK1 and IKBKE region. The interval 328–437 (ARNAGQRHSP…PPPPPGERTL (110 aa)) is disordered. The span at 346 to 361 (PACPSPSPPARPPPCA) shows a compositional bias: pro residues. Low complexity predominate over residues 362 to 372 (PCQSPAAQRRS). S365, S372, S379, S385, S400, and S415 each carry phosphoserine. A compositionally biased stretch (pro residues) spans 389–406 (PSCPSPVPQRRSPVPPSC). The segment covering 416-433 (PVPPSCPAPQPRPPPPPG) has biased composition (pro residues). Phosphoserine occurs at positions 500 and 530. The UBZ1-type zinc-finger motif lies at 579 to 605 (IRSCPLCQLGFPVGYPDDALIKHIDSH). Zn(2+) is bound by residues C582, C585, H601, and H605.

As to quaternary structure, homodimer. May form a heterodimer with NAP1. Interacts with TKB1 and IKBKE. Weakly interacts with DDX3X.

Functionally, adapter protein which constitutively binds TBK1 and IKBKE playing a role in antiviral innate immunity. Essential for the efficient induction of IRF-dependent transcription following infection with Sendai virus. This Mus musculus (Mouse) protein is TANK-binding kinase 1-binding protein 1.